The following is a 101-amino-acid chain: Small ribosomal subunit protein uS14 (101 aa).

Residues 1–20 form a disordered region; it reads MAKTSAVEKNKRRRKLVANH. Residues 10–20 show a composition bias toward basic residues; it reads NKRRRKLVANH.

It belongs to the universal ribosomal protein uS14 family. Part of the 30S ribosomal subunit. Contacts proteins S3 and S10.

Functionally, binds 16S rRNA, required for the assembly of 30S particles and may also be responsible for determining the conformation of the 16S rRNA at the A site. In Sinorhizobium medicae (strain WSM419) (Ensifer medicae), this protein is Small ribosomal subunit protein uS14.